The primary structure comprises 468 residues: Argininosuccinate synthase (468 aa).

ATP is bound by residues A10–S18 and A37. Positions 90 and 95 each coordinate L-citrulline. Residue G120 participates in ATP binding. L-aspartate-binding residues include T122, N126, and D127. N126 contacts L-citrulline. R130, S182, S191, E267, and Y279 together coordinate L-citrulline. Low complexity predominate over residues P445–A457. Residues P445–G468 form a disordered region. Over residues P458 to G468 the composition is skewed to basic residues.

The protein belongs to the argininosuccinate synthase family. Type 1 subfamily. In terms of assembly, homotetramer.

The protein localises to the cytoplasm. It carries out the reaction L-citrulline + L-aspartate + ATP = 2-(N(omega)-L-arginino)succinate + AMP + diphosphate + H(+). It participates in amino-acid biosynthesis; L-arginine biosynthesis; L-arginine from L-ornithine and carbamoyl phosphate: step 2/3. The chain is Argininosuccinate synthase from Dechloromonas aromatica (strain RCB).